We begin with the raw amino-acid sequence, 344 residues long: Holliday junction branch migration complex subunit RuvB (344 aa).

The interval 1–182 (MRIELLNTPV…FGISNRFDYY (182 aa)) is large ATPase domain (RuvB-L). ATP contacts are provided by residues isoleucine 21, arginine 22, glycine 63, lysine 66, threonine 67, threonine 68, 129–131 (EDF), arginine 172, tyrosine 182, and arginine 219. Residue threonine 67 participates in Mg(2+) binding. A small ATPAse domain (RuvB-S) region spans residues 183-253 (PPELLETILM…TAMKTLDSLE (71 aa)). The head domain (RuvB-H) stretch occupies residues 256–344 (EEGLDEMDKK…GTLFDGQEHV (89 aa)). DNA-binding residues include arginine 311 and arginine 316.

It belongs to the RuvB family. Homohexamer. Forms an RuvA(8)-RuvB(12)-Holliday junction (HJ) complex. HJ DNA is sandwiched between 2 RuvA tetramers; dsDNA enters through RuvA and exits via RuvB. An RuvB hexamer assembles on each DNA strand where it exits the tetramer. Each RuvB hexamer is contacted by two RuvA subunits (via domain III) on 2 adjacent RuvB subunits; this complex drives branch migration. In the full resolvosome a probable DNA-RuvA(4)-RuvB(12)-RuvC(2) complex forms which resolves the HJ.

The protein resides in the cytoplasm. The enzyme catalyses ATP + H2O = ADP + phosphate + H(+). Functionally, the RuvA-RuvB-RuvC complex processes Holliday junction (HJ) DNA during genetic recombination and DNA repair, while the RuvA-RuvB complex plays an important role in the rescue of blocked DNA replication forks via replication fork reversal (RFR). RuvA specifically binds to HJ cruciform DNA, conferring on it an open structure. The RuvB hexamer acts as an ATP-dependent pump, pulling dsDNA into and through the RuvAB complex. RuvB forms 2 homohexamers on either side of HJ DNA bound by 1 or 2 RuvA tetramers; 4 subunits per hexamer contact DNA at a time. Coordinated motions by a converter formed by DNA-disengaged RuvB subunits stimulates ATP hydrolysis and nucleotide exchange. Immobilization of the converter enables RuvB to convert the ATP-contained energy into a lever motion, pulling 2 nucleotides of DNA out of the RuvA tetramer per ATP hydrolyzed, thus driving DNA branch migration. The RuvB motors rotate together with the DNA substrate, which together with the progressing nucleotide cycle form the mechanistic basis for DNA recombination by continuous HJ branch migration. Branch migration allows RuvC to scan DNA until it finds its consensus sequence, where it cleaves and resolves cruciform DNA. The sequence is that of Holliday junction branch migration complex subunit RuvB from Chlorobium luteolum (strain DSM 273 / BCRC 81028 / 2530) (Pelodictyon luteolum).